Consider the following 173-residue polypeptide: Large ribosomal subunit protein uL10 (173 aa).

Belongs to the universal ribosomal protein uL10 family. In terms of assembly, part of the ribosomal stalk of the 50S ribosomal subunit. The N-terminus interacts with L11 and the large rRNA to form the base of the stalk. The C-terminus forms an elongated spine to which L12 dimers bind in a sequential fashion forming a multimeric L10(L12)X complex.

Its function is as follows. Forms part of the ribosomal stalk, playing a central role in the interaction of the ribosome with GTP-bound translation factors. The polypeptide is Large ribosomal subunit protein uL10 (Maridesulfovibrio salexigens (strain ATCC 14822 / DSM 2638 / NCIMB 8403 / VKM B-1763) (Desulfovibrio salexigens)).